Reading from the N-terminus, the 123-residue chain is Nitrogenase-stabilizing/protective protein NifW (123 aa).

It belongs to the NifW family. Homotrimer; associates with NifD.

Functionally, may protect the nitrogenase Fe-Mo protein from oxidative damage. The protein is Nitrogenase-stabilizing/protective protein NifW of Rhodopseudomonas palustris (strain HaA2).